Reading from the N-terminus, the 99-residue chain is Small ribosomal subunit protein uS14m (99 aa).

It belongs to the universal ribosomal protein uS14 family.

Its subcellular location is the mitochondrion. This chain is Small ribosomal subunit protein uS14m (RPS14), found in Marchantia polymorpha (Common liverwort).